Here is a 662-residue protein sequence, read N- to C-terminus: Polyunsaturated fatty acid (12S)/(13S)-lipoxygenase, epidermal-type (662 aa).

Residues 2–114 (GKYKILVVTG…TIYLPEGTAL (113 aa)) enclose the PLAT domain. In terms of domain architecture, Lipoxygenase spans 114–662 (LKVNDDTKNL…PSMVENSVTI (549 aa)). Residues His-360, His-365, His-540, His-544, and Ile-662 each contribute to the Fe cation site.

The protein belongs to the lipoxygenase family. Fe cation is required as a cofactor.

It is found in the cytoplasm. It carries out the reaction (5Z,8Z,11Z,14Z)-eicosatetraenoate + O2 = (12S)-hydroperoxy-(5Z,8Z,10E,14Z)-eicosatetraenoate. The enzyme catalyses 1-O-methyl-(9Z,12Z)-octadecadienoate + O2 = 1-O-methyl-(13S)-hydroperoxy-(9Z,11E)-octadecadienoate. The catalysed reaction is (8Z,11Z,14Z)-eicosatrienoate + O2 = (12S)-hydroperoxy-(8Z,10E,14Z)-eicosatrienoate. It catalyses the reaction (5Z,8Z,11Z)-eicosatrienoate + O2 = (12S)-hydroperoxy-(5Z,8Z,10E)-eicosatrienoate. It carries out the reaction 1-O-methyl-(5Z,8Z,11Z,14Z)-eicosatetraenoate + O2 = 1-O-methyl-(12S)-hydroperoxy-(5Z,8Z,10E,14Z)-eicosatetraenoate. The enzyme catalyses (9Z,12Z)-octadecadienoate + O2 = (13S)-hydroperoxy-(9Z,11E)-octadecadienoate. The catalysed reaction is (4Z,7Z,10Z,13Z,16Z,19Z)-docosahexaenoate + O2 = (14S)-hydroperoxy-(4Z,7Z,10Z,12E,16Z,19Z)-docosahexaenoate. The protein operates within lipid metabolism; hydroperoxy eicosatetraenoic acid biosynthesis. Its activity is regulated as follows. Arachidonate 12-lipoxygenase activity is decreased when the pH decreases from 7.4 to 6.0. Functionally, catalyzes the regio and stereo-specific incorporation of a single molecule of dioxygen into free and esterified polyunsaturated fatty acids generating lipid hydroperoxides that can be further reduced to the corresponding hydroxy species. Shows increasing catalytic activity within the series arachidonic acid &lt; 5,8,11-eicosatrienoic acid &lt; linoleic acid &lt; 8,11,14-eicosatrienoic acid. The sequence is that of Polyunsaturated fatty acid (12S)/(13S)-lipoxygenase, epidermal-type from Rattus norvegicus (Rat).